The chain runs to 250 residues: 2,3-bisphosphoglycerate-dependent phosphoglycerate mutase (250 aa).

Substrate is bound by residues 10–17 (RHGESQWN), 23–24 (TG), R62, 89–92 (ERHY), K100, 116–117 (RR), and 185–186 (GN). The active-site Tele-phosphohistidine intermediate is the H11. The Proton donor/acceptor role is filled by E89.

The protein belongs to the phosphoglycerate mutase family. BPG-dependent PGAM subfamily. In terms of assembly, homodimer.

The catalysed reaction is (2R)-2-phosphoglycerate = (2R)-3-phosphoglycerate. It functions in the pathway carbohydrate degradation; glycolysis; pyruvate from D-glyceraldehyde 3-phosphate: step 3/5. Catalyzes the interconversion of 2-phosphoglycerate and 3-phosphoglycerate. This is 2,3-bisphosphoglycerate-dependent phosphoglycerate mutase from Pectobacterium carotovorum subsp. carotovorum (strain PC1).